The sequence spans 136 residues: Protein NrdI (136 aa).

It belongs to the NrdI family.

Functionally, probably involved in ribonucleotide reductase function. The protein is Protein NrdI of Salmonella paratyphi A (strain ATCC 9150 / SARB42).